Reading from the N-terminus, the 430-residue chain is Gamma-glutamyl phosphate reductase (430 aa).

The protein belongs to the gamma-glutamyl phosphate reductase family.

Its subcellular location is the cytoplasm. It carries out the reaction L-glutamate 5-semialdehyde + phosphate + NADP(+) = L-glutamyl 5-phosphate + NADPH + H(+). It participates in amino-acid biosynthesis; L-proline biosynthesis; L-glutamate 5-semialdehyde from L-glutamate: step 2/2. In terms of biological role, catalyzes the NADPH-dependent reduction of L-glutamate 5-phosphate into L-glutamate 5-semialdehyde and phosphate. The product spontaneously undergoes cyclization to form 1-pyrroline-5-carboxylate. The sequence is that of Gamma-glutamyl phosphate reductase from Rhodopseudomonas palustris (strain BisA53).